The sequence spans 64 residues: Large ribosomal subunit protein uL29 (64 aa).

It belongs to the universal ribosomal protein uL29 family.

This Porphyromonas gingivalis (strain ATCC 33277 / DSM 20709 / CIP 103683 / JCM 12257 / NCTC 11834 / 2561) protein is Large ribosomal subunit protein uL29.